The primary structure comprises 135 residues: Lysozyme 2 (135 aa).

Residues 1 to 18 form the signal peptide; the sequence is MNFLILFCVVASASVVYS. Residues 19 to 135 form the I-type lysozyme domain; that stretch reads SISDQCLRCI…WRLVQAKGCS (117 aa). 6 disulfide bridges follow: cysteine 24/cysteine 100, cysteine 29/cysteine 35, cysteine 40/cysteine 49, cysteine 62/cysteine 82, cysteine 72/cysteine 78, and cysteine 96/cysteine 114. The active-site Proton donor is the glutamate 32. Aspartate 43 serves as the catalytic Nucleophile. 55-61 is a binding site for substrate; it reads KQGYWTD. Substrate contacts are provided by residues tyrosine 86 and 107 to 109; that span reads HNG.

As to expression, expressed in the epithelia of the basophil cells in the digestive tubules, but not in the epithelial cells lining the digestive ducts and stomach. Expressed at a much lower level in the style sac-midgut tissues. No expression detected in mantle, gills, labial palps or hemocytes.

Its subcellular location is the secreted. The enzyme catalyses Hydrolysis of (1-&gt;4)-beta-linkages between N-acetylmuramic acid and N-acetyl-D-glucosamine residues in a peptidoglycan and between N-acetyl-D-glucosamine residues in chitodextrins.. Its activity is regulated as follows. Activity decreased by 80% by addition of 0.01 M calcium, zinc or magnesium. Activity only decreased by 17% by addition of ammonium, and by 2% by addition of sodium. Its function is as follows. The main role of this lysozyme is in digestion. Has antibacterial activity against the Gram-positive bacterium P.cerevisiae and the Gram-negative bacteria E.coli and V.vulnificus. Shows some chitinase activity but no isopeptidase activity. The polypeptide is Lysozyme 2 (Crassostrea virginica (Eastern oyster)).